The chain runs to 208 residues: Endoplasmic reticulum vesicle protein 25 (208 aa).

Residues M1–A15 form the signal peptide. Over L16–R177 the chain is Lumenal. One can recognise a GOLD domain in the interval Q28–S118. A helical transmembrane segment spans residues N178 to L198. Residues K199–I208 lie on the Cytoplasmic side of the membrane.

It belongs to the EMP24/GP25L family.

The protein localises to the endoplasmic reticulum membrane. It localises to the golgi apparatus membrane. Its function is as follows. Constituent of COPII-coated endoplasmic reticulum-derived transport vesicles. Required for efficient transport of a subset of secretory proteins to the Golgi. Facilitates retrograde transport from the Golgi to the endoplasmic reticulum. The polypeptide is Endoplasmic reticulum vesicle protein 25 (ERV25) (Candida glabrata (strain ATCC 2001 / BCRC 20586 / JCM 3761 / NBRC 0622 / NRRL Y-65 / CBS 138) (Yeast)).